We begin with the raw amino-acid sequence, 308 residues long: Bifunctional protein FolD (308 aa).

NADP(+) contacts are provided by residues G175–S177, S200, and I241.

Belongs to the tetrahydrofolate dehydrogenase/cyclohydrolase family. Homodimer.

It catalyses the reaction (6R)-5,10-methylene-5,6,7,8-tetrahydrofolate + NADP(+) = (6R)-5,10-methenyltetrahydrofolate + NADPH. It carries out the reaction (6R)-5,10-methenyltetrahydrofolate + H2O = (6R)-10-formyltetrahydrofolate + H(+). The protein operates within one-carbon metabolism; tetrahydrofolate interconversion. Catalyzes the oxidation of 5,10-methylenetetrahydrofolate to 5,10-methenyltetrahydrofolate and then the hydrolysis of 5,10-methenyltetrahydrofolate to 10-formyltetrahydrofolate. The sequence is that of Bifunctional protein FolD from Jannaschia sp. (strain CCS1).